The primary structure comprises 264 residues: Phosphonoacetaldehyde hydrolase (264 aa).

Catalysis depends on Asp-10, which acts as the Nucleophile. Mg(2+)-binding residues include Asp-10 and Ala-12. Catalysis depends on Lys-52, which acts as the Schiff-base intermediate with substrate. Asp-185 contributes to the Mg(2+) binding site.

This sequence belongs to the HAD-like hydrolase superfamily. PhnX family. As to quaternary structure, homodimer. The cofactor is Mg(2+).

The enzyme catalyses phosphonoacetaldehyde + H2O = acetaldehyde + phosphate + H(+). In terms of biological role, involved in phosphonate degradation. This Parabacteroides distasonis (strain ATCC 8503 / DSM 20701 / CIP 104284 / JCM 5825 / NCTC 11152) protein is Phosphonoacetaldehyde hydrolase.